Consider the following 49-residue polypeptide: Small, acid-soluble spore protein O (49 aa).

Residues 1–49 (MGKRKANHTISGMNAASAQGQGAGYNEEFANENLTPAERQNNKKRKKNQ) form a disordered region. Over residues 8-20 (HTISGMNAASAQG) the composition is skewed to polar residues.

The protein belongs to the SspO family.

Its subcellular location is the spore core. The polypeptide is Small, acid-soluble spore protein O (Bacillus anthracis (strain A0248)).